An 860-amino-acid chain; its full sequence is Leucine--tRNA ligase (860 aa).

The 'HIGH' region motif lies at 42–52; that stretch reads PYPSGRLHMGH. Residues 619–623 carry the 'KMSKS' region motif; sequence KMSKS. Residue Lys622 participates in ATP binding.

The protein belongs to the class-I aminoacyl-tRNA synthetase family.

It is found in the cytoplasm. It catalyses the reaction tRNA(Leu) + L-leucine + ATP = L-leucyl-tRNA(Leu) + AMP + diphosphate. This Escherichia coli (strain ATCC 8739 / DSM 1576 / NBRC 3972 / NCIMB 8545 / WDCM 00012 / Crooks) protein is Leucine--tRNA ligase.